The following is a 311-amino-acid chain: MDRLQRLMMSQRSNMIGAAATEMPLDDTKETVYISSLALLKMLKHSRAGVPMEVMGLMLGDFVDEYTVNVVDVFAMPQSGTGVSVEAVDDVFQAKMMDMLKQTGRDQMVVGWYHSHPGFGCWLSSVDVDTQRSFEQLNSRAVAVVVDPIQSVKGKVVIDAFRLISPATVVRNQEPRQTTSNVGLLNKPNIQSLIHGLNRHYYSLNIDYHKTSAELNMLMNLHKEQWQSGLKMHDYKEKERINLEATKKSVRIAEQYTKRIEEEKELTEDELKTRYVGKQDPKKHLSETAERVLEENIVSVLTAGVNSVAIK.

In terms of domain architecture, MPN spans 32–167 (VYISSLALLK…IDAFRLISPA (136 aa)). 3 residues coordinate Zn(2+): H114, H116, and D127. Residues 114–127 (HSHPGFGCWLSSVD) carry the JAMM motif motif.

Belongs to the peptidase M67A family.

Acts as a regulatory subunit of the 26 proteasome which is involved in the ATP-dependent degradation of ubiquitinated proteins. This Eremothecium gossypii (strain ATCC 10895 / CBS 109.51 / FGSC 9923 / NRRL Y-1056) (Yeast) protein is 26S proteasome regulatory subunit RPN11 (RPN11).